The sequence spans 282 residues: 2-dehydro-3-deoxyphosphooctonate aldolase (282 aa).

The protein belongs to the KdsA family.

The protein localises to the cytoplasm. It carries out the reaction D-arabinose 5-phosphate + phosphoenolpyruvate + H2O = 3-deoxy-alpha-D-manno-2-octulosonate-8-phosphate + phosphate. Its pathway is carbohydrate biosynthesis; 3-deoxy-D-manno-octulosonate biosynthesis; 3-deoxy-D-manno-octulosonate from D-ribulose 5-phosphate: step 2/3. It participates in bacterial outer membrane biogenesis; lipopolysaccharide biosynthesis. This Agrobacterium fabrum (strain C58 / ATCC 33970) (Agrobacterium tumefaciens (strain C58)) protein is 2-dehydro-3-deoxyphosphooctonate aldolase.